The sequence spans 122 residues: Large ribosomal subunit protein uL14 (122 aa).

It belongs to the universal ribosomal protein uL14 family. Part of the 50S ribosomal subunit. Forms a cluster with proteins L3 and L19. In the 70S ribosome, L14 and L19 interact and together make contacts with the 16S rRNA in bridges B5 and B8.

In terms of biological role, binds to 23S rRNA. Forms part of two intersubunit bridges in the 70S ribosome. In Frankia alni (strain DSM 45986 / CECT 9034 / ACN14a), this protein is Large ribosomal subunit protein uL14.